A 301-amino-acid polypeptide reads, in one-letter code: MSYKKFVYFINLFFLLGATLLTFFLILAGGRTTGVLKNFYWFQASTSGFNSAPSVTRWYNYNWCGWESRGIAVNCSSKMAAQPFSPRDNFGSSPLMPSTFLNNRNAYYYLSRVGWAMLLIGLFFLLITLVSVIASLIRYNRRTAALATAMSWITLFFITLSACLYTGCYAKAVKAFHHENRDARLGPKNFGLIWTTVFLLIVNAICCTIMVATHKRNEYIYDRSFASTKTVDSQTPTPVPTNGGIPSSVPVTEVQQSQSHQNHRFFKKLRTKKRTVTSAGDEPDRVQEERVYTEQNVPVVS.

The Extracellular segment spans residues 1 to 5 (MSYKK). A helical membrane pass occupies residues 6–26 (FVYFINLFFLLGATLLTFFLI). The Cytoplasmic portion of the chain corresponds to 27-112 (LAGGRTTGVL…NRNAYYYLSR (86 aa)). The chain crosses the membrane as a helical span at residues 113–133 (VGWAMLLIGLFFLLITLVSVI). Residues 134-143 (ASLIRYNRRT) are Extracellular-facing. A helical membrane pass occupies residues 144–164 (AALATAMSWITLFFITLSACL). At 165–191 (YTGCYAKAVKAFHHENRDARLGPKNFG) the chain is on the cytoplasmic side. The chain crosses the membrane as a helical span at residues 192-212 (LIWTTVFLLIVNAICCTIMVA). Residues 213–301 (THKRNEYIYD…YTEQNVPVVS (89 aa)) are Extracellular-facing. The tract at residues 254-301 (VQQSQSHQNHRFFKKLRTKKRTVTSAGDEPDRVQEERVYTEQNVPVVS) is disordered. Positions 261–275 (QNHRFFKKLRTKKRT) are enriched in basic residues. Over residues 282 to 292 (EPDRVQEERVY) the composition is skewed to basic and acidic residues.

This sequence belongs to the SUR7 family.

The protein resides in the cell membrane. Its function is as follows. Involved in sporulation and affects the sphingolipid composition of the plasma membrane. This is an uncharacterized protein from Saccharomyces cerevisiae (strain ATCC 204508 / S288c) (Baker's yeast).